Here is a 512-residue protein sequence, read N- to C-terminus: Glutamyl-tRNA(Gln) amidotransferase subunit A (512 aa).

Residues lysine 82 and serine 157 each act as charge relay system in the active site. Serine 181 acts as the Acyl-ester intermediate in catalysis.

It belongs to the amidase family. GatA subfamily. Heterotrimer of A, B and C subunits.

It carries out the reaction L-glutamyl-tRNA(Gln) + L-glutamine + ATP + H2O = L-glutaminyl-tRNA(Gln) + L-glutamate + ADP + phosphate + H(+). Allows the formation of correctly charged Gln-tRNA(Gln) through the transamidation of misacylated Glu-tRNA(Gln) in organisms which lack glutaminyl-tRNA synthetase. The reaction takes place in the presence of glutamine and ATP through an activated gamma-phospho-Glu-tRNA(Gln). The protein is Glutamyl-tRNA(Gln) amidotransferase subunit A of Bordetella bronchiseptica (strain ATCC BAA-588 / NCTC 13252 / RB50) (Alcaligenes bronchisepticus).